The sequence spans 414 residues: Probable elongation factor 1-gamma 1 (414 aa).

Residues 1 to 82 (MALVLHTYKG…YVSRLNGDNS (82 aa)) enclose the GST N-terminal domain. In terms of domain architecture, GST C-terminal spans 87 to 215 (SLIEYAQIEQ…VKQTEAVPPI (129 aa)). Positions 214–224 (PIASKKAAQPA) are enriched in low complexity. The segment at 214–260 (PIASKKAAQPAKPKEEPKKKEAPVAEAPKLAEEEEAPKPKAKNPLDL) is disordered. Over residues 225-236 (KPKEEPKKKEAP) the composition is skewed to basic and acidic residues. Positions 254–414 (AKNPLDLLPP…EALLDAKCFK (161 aa)) constitute an EF-1-gamma C-terminal domain.

As to quaternary structure, EF-1 is composed of four subunits: alpha, beta, delta, and gamma.

Probably plays a role in anchoring the complex to other cellular components. The protein is Probable elongation factor 1-gamma 1 of Arabidopsis thaliana (Mouse-ear cress).